Reading from the N-terminus, the 465-residue chain is Ras GTPase-activating protein-binding protein 1 (465 aa).

An NTF2 domain is found at 11–133 (VGREFVRQYY…FYVHNDIFRY (123 aa)). Residues K36, K50, K59, K64, K76, and K123 each participate in a glycyl lysine isopeptide (Lys-Gly) (interchain with G-Cter in ubiquitin) cross-link. An acidic disordered region region spans residues 142-224 (ITEPQEESEE…EPVLEETAPE (83 aa)). T143 is subject to Phosphothreonine. Acidic residues-rich tracts occupy residues 145 to 157 (PQEE…EEPE) and 184 to 205 (EHLE…EQEP). Residues 145–242 (PQEESEEEVE…APADIAQTVQ (98 aa)) are disordered. S149 is subject to Phosphoserine. S230, S231, S249, and S252 each carry phosphoserine. Residues 254 to 326 (TSKNLPPSGA…PVREAGEQGD (73 aa)) are disordered. Composition is skewed to basic and acidic residues over residues 296-306 (PQRDQRVREQR) and 317-326 (PVREAGEQGD). Positions 339–414 (HQLFIGNLPH…VRLNVEEKKT (76 aa)) constitute an RRM domain. Glycyl lysine isopeptide (Lys-Gly) (interchain with G-Cter in ubiquitin) cross-links involve residues K352 and K356. S372 carries the phosphoserine modification. K375 is covalently cross-linked (Glycyl lysine isopeptide (Lys-Gly) (interchain with G-Cter in ubiquitin)). Residue K375 is modified to N6-acetyllysine; alternate. A Glycyl lysine isopeptide (Lys-Gly) (interchain with G-Cter in SUMO2); alternate cross-link involves residue K375. A Glycyl lysine isopeptide (Lys-Gly) (interchain with G-Cter in ubiquitin); alternate cross-link involves residue K392. The segment at 409-465 (VEEKKTRAAREGDRRDNRLRGPGGPRGGLGGGMRGPPRGGMVQKPGFGVGRSIAPRQ) is RG-rich region. Residues 412-427 (KKTRAAREGDRRDNRL) show a composition bias toward basic and acidic residues. Positions 412-465 (KKTRAAREGDRRDNRLRGPGGPRGGLGGGMRGPPRGGMVQKPGFGVGRSIAPRQ) are disordered. R428 bears the Asymmetric dimethylarginine mark. Over residues 429 to 446 (GPGGPRGGLGGGMRGPPR) the composition is skewed to gly residues. R434 carries the post-translational modification Asymmetric dimethylarginine; alternate. Omega-N-methylarginine; alternate occurs at positions 434, 446, 459, and 464. R459 is modified (dimethylated arginine; alternate).

In terms of assembly, homodimer and oligomer. Component of a TAU mRNP complex, at least composed of IGF2BP1, ELAVL4 and G3BP1. Binds to the SH3 domain of Ras GTPase-activating protein (RASA1) in proliferating cells. No interaction in quiescent cells. Interacts (via NTF2 domain) with USP10; inhibiting stress granule formation by lowering G3BP1 valence. Interacts (via NTF2 domain) with CAPRIN1; promoting stress granule formation by lowering the saturation-concentration of G3BP1. Interacts (via NTF2 domain) with UBAP2L; promoting stress granule formation. Associates (via RG-rich region) with 40S ribosome subunits. Interacts with RPTOR and SPAG5; this complex is increased by oxidative stress. Interacts with ATXN2L. Interacts with STYXL1. Interacts with CGAS (via N-terminus); this interaction promotes the DNA-binding and activation of CGAS. Interacts (via C-terminus) with RIGI. Interacts with PABPC1. Interacts with QKI (isoforms QKI6 and QKI7); directing N(7)-methylguanine-containing mRNAs to stress granules. It depends on Mg(2+) as a cofactor. Phosphorylation of the acidic disordered region regulates stress granule assembly. RASA1-dependent phosphorylation of Ser-149 induces a conformational change that prevents self-association. Dephosphorylation after HRAS activation is required for stress granule assembly. Ser-149 phosphorylation induces partial nuclear localization. Post-translationally, arg-435 is dimethylated, probably to asymmetric dimethylarginine. In terms of processing, ubiquitinated by TRIM21 via 'Lys-63'-linked polyubiquitination in the NTF2 domain in response to heat shock, leading to stress granule disassembly: ubiquitination promotes interaction with the FAF2 adapter, followed by interaction with VCP, which extracts G3BP1 from stress granules, leading to stress granule disassembly. In case of prolonged stress, ubiquitination by TRIM21 leads to autophagy-dependent degradation of G3BP1 via recruitment of ubiquitinated G3BP1 by SQSTM1 and/or CALCOCO2 to autophagosomes.

Its subcellular location is the cytoplasm. It localises to the cytosol. The protein resides in the perikaryon. The protein localises to the stress granule. It is found in the nucleus. It carries out the reaction ATP + H2O = ADP + phosphate + H(+). Its activity is regulated as follows. Under physiological conditions, G3BP1 adopts a compact state that is stabilized by intramolecular interactions between the RG-rich and the acidic regions that inhibit phase separation. Upon stress, polysomes disassemble and mRNAs are released in an unfolded protein-free state. Binding of unfolded mRNA to G3BP1 outcompetes the intramolecular interactions and RNA-bound G3BP1 adopts an expanded conformation in which the RG-rich region becomes exposed to engage in protein-protein and protein-RNA interactions, allowing physical cross-linking of RNA molecules to form protein-RNA condensates, leading to liquid-liquid phase separation (LLPS). Its function is as follows. Protein involved in various processes, such as stress granule formation and innate immunity. Plays an essential role in stress granule formation. Stress granules are membraneless compartments that store mRNAs and proteins, such as stalled translation pre-initiation complexes, in response to stress. Promotes formation of stress granules phase-separated membraneless compartment by undergoing liquid-liquid phase separation (LLPS) upon unfolded RNA-binding: functions as a molecular switch that triggers RNA-dependent LLPS in response to a rise in intracellular free RNA concentrations. Also acts as an ATP- and magnesium-dependent helicase: unwinds DNA/DNA, RNA/DNA, and RNA/RNA substrates with comparable efficiency. Acts unidirectionally by moving in the 5' to 3' direction along the bound single-stranded DNA. Unwinds preferentially partial DNA and RNA duplexes having a 17 bp annealed portion and either a hanging 3' tail or hanging tails at both 5'- and 3'-ends. Plays an essential role in innate immunity by promoting CGAS and RIGI activity. Participates in the DNA-triggered cGAS/STING pathway by promoting the DNA binding and activation of CGAS. Triggers the condensation of cGAS, a process probably linked to the formation of membrane-less organelles. Also enhances RIGI-induced type I interferon production probably by helping RIGI at sensing pathogenic RNA. May also act as a phosphorylation-dependent sequence-specific endoribonuclease in vitro: Cleaves exclusively between cytosine and adenine and cleaves MYC mRNA preferentially at the 3'-UTR. The protein is Ras GTPase-activating protein-binding protein 1 (G3BP1) of Bos taurus (Bovine).